Reading from the N-terminus, the 213-residue chain is Nicotinate-nucleotide adenylyltransferase (213 aa).

It belongs to the NadD family.

It catalyses the reaction nicotinate beta-D-ribonucleotide + ATP + H(+) = deamido-NAD(+) + diphosphate. It participates in cofactor biosynthesis; NAD(+) biosynthesis; deamido-NAD(+) from nicotinate D-ribonucleotide: step 1/1. Functionally, catalyzes the reversible adenylation of nicotinate mononucleotide (NaMN) to nicotinic acid adenine dinucleotide (NaAD). The protein is Nicotinate-nucleotide adenylyltransferase of Salmonella typhimurium (strain LT2 / SGSC1412 / ATCC 700720).